Here is a 419-residue protein sequence, read N- to C-terminus: tRNA modification GTPase MnmE (419 aa).

(6S)-5-formyl-5,6,7,8-tetrahydrofolate is bound by residues Arg-20, Glu-76, and Arg-115. The 138-residue stretch at 211 to 348 folds into the TrmE-type G domain; that stretch reads GYEVAIIGPP…LLDLVYDRLR (138 aa). Asn-221 contributes to the K(+) binding site. Residues 221–226, 240–246, and 265–268 contribute to the GTP site; these read NAGKST, SEIAGTT, and DTAG. Ser-225 contributes to the Mg(2+) binding site. Positions 240, 242, and 245 each coordinate K(+). Thr-246 is a binding site for Mg(2+). Lys-419 provides a ligand contact to (6S)-5-formyl-5,6,7,8-tetrahydrofolate.

The protein belongs to the TRAFAC class TrmE-Era-EngA-EngB-Septin-like GTPase superfamily. TrmE GTPase family. In terms of assembly, homodimer. Heterotetramer of two MnmE and two MnmG subunits. K(+) is required as a cofactor.

The protein localises to the cytoplasm. In terms of biological role, exhibits a very high intrinsic GTPase hydrolysis rate. Involved in the addition of a carboxymethylaminomethyl (cmnm) group at the wobble position (U34) of certain tRNAs, forming tRNA-cmnm(5)s(2)U34. The protein is tRNA modification GTPase MnmE of Paracoccus denitrificans (strain Pd 1222).